A 251-amino-acid chain; its full sequence is NADPH-dependent oxidoreductase (251 aa).

It belongs to the flavin oxidoreductase frp family. The cofactor is FMN.

Functionally, reduces FMN, organic nitro compounds and disulfide DTNB. Involved in maintenance of the cellular redox state and the disulfide stress response. In Staphylococcus epidermidis (strain ATCC 35984 / DSM 28319 / BCRC 17069 / CCUG 31568 / BM 3577 / RP62A), this protein is NADPH-dependent oxidoreductase (nfrA).